A 344-amino-acid polypeptide reads, in one-letter code: Glyceraldehyde-3-phosphate dehydrogenase (344 aa).

NAD(+) is bound by residues 11-12 and glycine 110; that span reads TI. Position 139 to 141 (139 to 141) interacts with D-glyceraldehyde 3-phosphate; the sequence is SCN. Cysteine 140 (nucleophile) is an active-site residue. Arginine 169 provides a ligand contact to NAD(+). 195 to 196 lines the D-glyceraldehyde 3-phosphate pocket; sequence HG. Glutamine 302 is an NAD(+) binding site.

This sequence belongs to the glyceraldehyde-3-phosphate dehydrogenase family. Homotetramer.

It is found in the cytoplasm. The enzyme catalyses D-glyceraldehyde 3-phosphate + phosphate + NADP(+) = (2R)-3-phospho-glyceroyl phosphate + NADPH + H(+). It carries out the reaction D-glyceraldehyde 3-phosphate + phosphate + NAD(+) = (2R)-3-phospho-glyceroyl phosphate + NADH + H(+). The protein operates within carbohydrate degradation; glycolysis; pyruvate from D-glyceraldehyde 3-phosphate: step 1/5. The sequence is that of Glyceraldehyde-3-phosphate dehydrogenase from Pyrobaculum islandicum (strain DSM 4184 / JCM 9189 / GEO3).